Consider the following 233-residue polypeptide: Triosephosphate isomerase (233 aa).

Asparagine 8–lysine 10 is a binding site for substrate. The Electrophile role is filled by histidine 91. Glutamate 155 (proton acceptor) is an active-site residue. Substrate contacts are provided by glycine 161 and serine 192.

The protein belongs to the triosephosphate isomerase family. As to quaternary structure, homodimer.

It is found in the cytoplasm. It catalyses the reaction D-glyceraldehyde 3-phosphate = dihydroxyacetone phosphate. It participates in carbohydrate biosynthesis; gluconeogenesis. It functions in the pathway carbohydrate degradation; glycolysis; D-glyceraldehyde 3-phosphate from glycerone phosphate: step 1/1. Involved in the gluconeogenesis. Catalyzes stereospecifically the conversion of dihydroxyacetone phosphate (DHAP) to D-glyceraldehyde-3-phosphate (G3P). The polypeptide is Triosephosphate isomerase (Wolbachia sp. subsp. Brugia malayi (strain TRS)).